The sequence spans 274 residues: Phosphoribosylaminoimidazole-succinocarboxamide synthase (274 aa).

Belongs to the SAICAR synthetase family.

The enzyme catalyses 5-amino-1-(5-phospho-D-ribosyl)imidazole-4-carboxylate + L-aspartate + ATP = (2S)-2-[5-amino-1-(5-phospho-beta-D-ribosyl)imidazole-4-carboxamido]succinate + ADP + phosphate + 2 H(+). Its pathway is purine metabolism; IMP biosynthesis via de novo pathway; 5-amino-1-(5-phospho-D-ribosyl)imidazole-4-carboxamide from 5-amino-1-(5-phospho-D-ribosyl)imidazole-4-carboxylate: step 1/2. The protein is Phosphoribosylaminoimidazole-succinocarboxamide synthase of Nitrosopumilus maritimus (strain SCM1).